We begin with the raw amino-acid sequence, 773 residues long: Subtilisin-like protease SBT3.4 (773 aa).

Positions 1-23 are cleaved as a signal peptide; that stretch reads MRNFRSSVLVVLSLIIVLNVARA. Positions 24–108 are cleaved as a propeptide — activation peptide; it reads SAKSKVHIVY…VIPDSYYELA (85 aa). An Inhibitor I9 domain is found at 29–108; sequence VHIVYLGEKQ…VIPDSYYELA (80 aa). Residues 112–620 enclose the Peptidase S8 domain; that stretch reads IWDYLGPSAD…GGLVNPEKAA (509 aa). Asp142 acts as the Charge relay system in catalysis. A glycan (N-linked (GlcNAc...) asparagine) is linked at Asn200. Catalysis depends on His216, which acts as the Charge relay system. Residues Asn231, Asn408, and Asn536 are each glycosylated (N-linked (GlcNAc...) asparagine). The PA domain occupies 382-474; the sequence is SLVYPEDPGN…IDNELGTDIL (93 aa). The active-site Charge relay system is Ser551. Asn643 carries an N-linked (GlcNAc...) asparagine glycan.

It belongs to the peptidase S8 family.

The protein localises to the secreted. The protein is Subtilisin-like protease SBT3.4 of Arabidopsis thaliana (Mouse-ear cress).